Consider the following 339-residue polypeptide: Heat-inducible transcription repressor HrcA (339 aa).

Belongs to the HrcA family.

Negative regulator of class I heat shock genes (grpE-dnaK-dnaJ and groELS operons). Prevents heat-shock induction of these operons. The polypeptide is Heat-inducible transcription repressor HrcA (Acidothermus cellulolyticus (strain ATCC 43068 / DSM 8971 / 11B)).